The sequence spans 709 residues: MARGEDSSSVQVLYQLSWDGKLEHPHMIEVHYPPNQGGLRLRDVKKRLTTLRGHGINDSFSWSSKRNYKNEFIWNDLCDDDVIQPLRGSGEYVLRASELFDTFTNKPWEHPSKHSNERMQSSRTMSVDNVTLQQGLINVKLHSGALAREDDQPSGEKLCCSGRRSCINLEDCSSKGVAIDIPKNLQNLSVDQETIDVEKSDFCLSSSDNEVSPRLKTAADCITPVKDVGLVVMTRSTTVHGLHTPAPRSLTSPTEPPFSPGSAKRMWKKEIRKSLFRTSRNSSNVNPVLSGENAALDVDVPPITLSTQEDVSFWRDGRSKSASPSSLNELREVQNEKEKEAEQSTSQLIRLLWARWTGGSSKGKRTPQSTCEDPLPKSPEAKQMPRSRTKTPCKEIRSTNHIAGSLPVTCPSPAVDNKAHSSLDRQEIPPQEECKNRPSPMTLQSCEEITSPVTEIEQDVEIGDIKAIVEEQASNKFPEPEFQQNLRTEQIVLSVQIPDLHIDALDSPTSDTQGSPAEADIPKSATARVKTSNSLPRVKTTTSPKPLPPGFHKGTNDTKPVQIITPRRTPRTSIPLASPPPLVRTFNRVSVRSLSSIAAITLSPENDSAASNLSPENPIVKKRINFRERDEMPLIPGLTTLDWEKALQEAVTDCLPPPNFREILQECSTCGRTFKPDSLQVHMRGCHPPQYARAFSARASPHVVRSRAS.

Residues 8–101 (SSVQVLYQLS…YVLRASELFD (94 aa)) form a DIX-like oligomerization domain region. Disordered regions lie at residues 242–266 (LHTPAPRSLTSPTEPPFSPGSAKRM), 315–344 (RDGRSKSASPSSLNELREVQNEKEKEAEQS), 358–393 (GGSSKGKRTPQSTCEDPLPKSPEAKQMPRSRTKTPC), 411–439 (PSPAVDNKAHSSLDRQEIPPQEECKNRPS), and 506–560 (DSPT…DTKP). Over residues 329–342 (ELREVQNEKEKEAE) the composition is skewed to basic and acidic residues. A compositionally biased stretch (basic and acidic residues) spans 417-436 (NKAHSSLDRQEIPPQEECKN). Residues 529-544 (VKTSNSLPRVKTTTSP) show a composition bias toward polar residues. The C2HC/C3H-type zinc-finger motif lies at 663–692 (ILQECSTCGRTFKPDSLQVHMRGCHPPQYA). Zn(2+) is bound by residues Cys667, Cys670, His682, and Cys686.

Belongs to the SOSEKI family. Homodimer. Forms long polymer filaments with other SOKs proteins polymers crucial for polar localization and biological activity. It depends on Zn(2+) as a cofactor.

It is found in the cell membrane. Its function is as follows. SOSEKI proteins locally interpret global polarity cues and can influence cell division orientation to coordinate cell polarization relative to body axes. The polypeptide is Protein SOSEKI 3 (Physcomitrium patens (Spreading-leaved earth moss)).